A 428-amino-acid polypeptide reads, in one-letter code: uncharacterized protein (428 aa).

Positions 72–91 (SQGSPVAPSPNHRSTMYSSS) are disordered. Ser-127 bears the Phosphoserine mark.

This is an uncharacterized protein from Saccharomyces cerevisiae (strain ATCC 204508 / S288c) (Baker's yeast).